The following is a 228-amino-acid chain: Vesicle transport protein SEC20 (228 aa).

The Cytoplasmic segment spans residues 1 to 199 (MAAPQDVHVR…LITKYNRREL (199 aa)). The stretch at 37–90 (LSELTELNTKVKEKFQQLKQRIQELEQSAREQDKESEKQLLLQEVENHKKQMLS) forms a coiled coil. A helical; Anchor for type IV membrane protein transmembrane segment spans residues 200 to 220 (TDKLLIFLALALFLATVLYIV). Residues 221–228 (KKRLFPFL) lie on the Lumenal side of the membrane.

Belongs to the SEC20 family. As to quaternary structure, component of a SNARE complex consisting of STX18, USE1L, BNIP1/SEC20L and SEC22B. Interacts directly with STX18, RINT1/TIP20L and NAPA. Interacts with ZW10 through RINT1. Interacts with BCL2. Interacts with RNF186. Interacts with RNF185. Interacts with SQSTM1; increased by 'Lys-63'-linked polyubiquitination of BNIP1. In terms of processing, polyubiquitinated. 'Lys-63'-linked polyubiquitination by RNF185 increases the interaction with the autophagy receptor SQSTM1. Undergoes 'Lys-29'- and 'Lys-63'-linked polyubiquitination by RNF186 that may regulate BNIP1 localization to the mitochondrion.

It is found in the endoplasmic reticulum membrane. The protein localises to the mitochondrion membrane. Functionally, as part of a SNARE complex may be involved in endoplasmic reticulum membranes fusion and be required for the maintenance of endoplasmic reticulum organization. Also plays a role in apoptosis. It is for instance required for endoplasmic reticulum stress-induced apoptosis. As a substrate of RNF185 interacting with SQSTM1, might also be involved in mitochondrial autophagy. The polypeptide is Vesicle transport protein SEC20 (Mus musculus (Mouse)).